Here is a 552-residue protein sequence, read N- to C-terminus: Putative acetolactate synthase large subunit IlvB2 (552 aa).

Residue Glu-48 coordinates thiamine diphosphate. Residues 262-285 and 309-328 each bind FAD; these read FGDGRADEYLFDTPCDLLIAVGVS and DPDPSAVGRFVATSLGITTS. The interval 394–474 is thiamine pyrophosphate binding; that stretch reads TCISWTFRGI…VTWAVLNDGQ (81 aa). Position 445 (Asp-445) interacts with Mg(2+).

This sequence belongs to the TPP enzyme family. In terms of assembly, heterodimer of large catalytic subunit and small regulatory subunit. The cofactor is Mg(2+). It depends on thiamine diphosphate as a cofactor.

The catalysed reaction is 2 pyruvate + H(+) = (2S)-2-acetolactate + CO2. The protein operates within amino-acid biosynthesis; L-isoleucine biosynthesis; L-isoleucine from 2-oxobutanoate: step 1/4. Its pathway is amino-acid biosynthesis; L-valine biosynthesis; L-valine from pyruvate: step 1/4. Functionally, catalyzes the conversion of 2 pyruvate molecules into acetolactate in the first common step of the biosynthetic pathway of the branched-amino acids such as leucine, isoleucine, and valine. The chain is Putative acetolactate synthase large subunit IlvB2 (ilvB2) from Mycobacterium tuberculosis (strain ATCC 25618 / H37Rv).